The chain runs to 337 residues: Heme A synthase (337 aa).

The next 5 membrane-spanning stretches (helical) occupy residues Ile6 to Ile26, Phe87 to Phe107, Leu119 to Val139, Leu154 to Lys174, and Leu192 to Val212. A heme-binding site is contributed by His256. The next 3 helical transmembrane spans lie at Leu258–Glu278, Ile285–Leu305, and Val308–Ile328. A heme-binding site is contributed by His316.

Belongs to the COX15/CtaA family. Type 2 subfamily. In terms of assembly, interacts with CtaB. The cofactor is heme b.

The protein localises to the cell membrane. It catalyses the reaction Fe(II)-heme o + 2 A + H2O = Fe(II)-heme a + 2 AH2. It functions in the pathway porphyrin-containing compound metabolism; heme A biosynthesis; heme A from heme O: step 1/1. Functionally, catalyzes the conversion of heme O to heme A by two successive hydroxylations of the methyl group at C8. The first hydroxylation forms heme I, the second hydroxylation results in an unstable dihydroxymethyl group, which spontaneously dehydrates, resulting in the formyl group of heme A. In Rickettsia rickettsii (strain Iowa), this protein is Heme A synthase.